Here is a 210-residue protein sequence, read N- to C-terminus: Probable GTP-binding protein EngB (210 aa).

Residues 30–204 (QGYEVAFAGR…YRVLADWMEL (175 aa)) form the EngB-type G domain. Residues 38–45 (GRSNAGKS), 64–68 (GRTQL), 82–85 (DLPG), 149–152 (TKAD), and 182–185 (LFSA) each bind GTP. Residues Ser-45 and Thr-66 each coordinate Mg(2+).

The protein belongs to the TRAFAC class TrmE-Era-EngA-EngB-Septin-like GTPase superfamily. EngB GTPase family. It depends on Mg(2+) as a cofactor.

In terms of biological role, necessary for normal cell division and for the maintenance of normal septation. This Pseudomonas entomophila (strain L48) protein is Probable GTP-binding protein EngB.